Reading from the N-terminus, the 384-residue chain is Glycine-rich cell wall structural protein 1 (384 aa).

The N-terminal stretch at 1 to 27 (MGSSQKWVIGLLLFSSIFFELTAITLA) is a signal peptide.

Its subcellular location is the secreted. It is found in the cell wall. In terms of biological role, responsible for plasticity of the cell wall. The sequence is that of Glycine-rich cell wall structural protein 1 (GRP-1) from Petunia hybrida (Petunia).